A 209-amino-acid chain; its full sequence is Glutathione S-transferase 1, isoform C (209 aa).

In terms of domain architecture, GST N-terminal spans 1–80 (MDFYYLPGSA…YLAEKYGKDD (80 aa)). Glutathione is bound by residues serine 9, 50 to 52 (HCI), and 64 to 66 (ESR). The 122-residue stretch at 86 to 207 (DPQKRAVVNQ…AGIEEFKKYF (122 aa)) folds into the GST C-terminal domain.

The protein belongs to the GST superfamily. Theta family. In terms of assembly, homodimer.

It carries out the reaction RX + glutathione = an S-substituted glutathione + a halide anion + H(+). The catalysed reaction is 1,1,1-trichloro-2,2-bis(4-chlorophenyl)ethane = 1,1-dichloro-2,2-bis(4-chlorophenyl)ethylene + chloride + H(+). In terms of biological role, conjugation of reduced glutathione to a wide number of exogenous and endogenous hydrophobic electrophiles. Has DDT dehydrochlorinase activity. This chain is Glutathione S-transferase 1, isoform C (GstD1), found in Anopheles gambiae (African malaria mosquito).